Consider the following 537-residue polypeptide: CTP synthase (537 aa).

Residues 1 to 267 (MTNTKFVFVT…ISVLEERLFG (267 aa)) are amidoligase domain. A CTP-binding site is contributed by S15. S15 contacts UTP. Position 16-21 (16-21 (SVGKGI)) interacts with ATP. L-glutamine is bound at residue Y56. D73 is a binding site for ATP. Mg(2+)-binding residues include D73 and E141. CTP is bound by residues 148–150 (DIE), 188–193 (KTKPTQ), and K224. UTP is bound by residues 188–193 (KTKPTQ) and K224. One can recognise a Glutamine amidotransferase type-1 domain in the interval 297 to 535 (YVVLPDAYLS…LSEAVAKASP (239 aa)). Residue G355 coordinates L-glutamine. The active-site Nucleophile; for glutamine hydrolysis is the C382. Residues 383–386 (LGMQ), E406, and R463 contribute to the L-glutamine site. Catalysis depends on residues H508 and E510.

Belongs to the CTP synthase family. In terms of assembly, homotetramer.

The catalysed reaction is UTP + L-glutamine + ATP + H2O = CTP + L-glutamate + ADP + phosphate + 2 H(+). The enzyme catalyses L-glutamine + H2O = L-glutamate + NH4(+). It catalyses the reaction UTP + NH4(+) + ATP = CTP + ADP + phosphate + 2 H(+). The protein operates within pyrimidine metabolism; CTP biosynthesis via de novo pathway; CTP from UDP: step 2/2. With respect to regulation, allosterically activated by GTP, when glutamine is the substrate; GTP has no effect on the reaction when ammonia is the substrate. The allosteric effector GTP functions by stabilizing the protein conformation that binds the tetrahedral intermediate(s) formed during glutamine hydrolysis. Inhibited by the product CTP, via allosteric rather than competitive inhibition. Catalyzes the ATP-dependent amination of UTP to CTP with either L-glutamine or ammonia as the source of nitrogen. Regulates intracellular CTP levels through interactions with the four ribonucleotide triphosphates. This Coprothermobacter proteolyticus (strain ATCC 35245 / DSM 5265 / OCM 4 / BT) protein is CTP synthase.